Consider the following 344-residue polypeptide: Phosphate acyltransferase (344 aa).

The protein belongs to the PlsX family. Homodimer. Probably interacts with PlsY.

The protein localises to the cytoplasm. The catalysed reaction is a fatty acyl-[ACP] + phosphate = an acyl phosphate + holo-[ACP]. Its pathway is lipid metabolism; phospholipid metabolism. In terms of biological role, catalyzes the reversible formation of acyl-phosphate (acyl-PO(4)) from acyl-[acyl-carrier-protein] (acyl-ACP). This enzyme utilizes acyl-ACP as fatty acyl donor, but not acyl-CoA. The sequence is that of Phosphate acyltransferase from Yersinia pestis bv. Antiqua (strain Antiqua).